The chain runs to 512 residues: Catalase (512 aa).

Residues H60 and N133 contribute to the active site. Heme is bound at residue Y344. S363 carries the post-translational modification Phosphoserine. Basic and acidic residues predominate over residues E488–P505. Residues E488 to S512 form a disordered region.

This sequence belongs to the catalase family. Requires heme as cofactor.

Its subcellular location is the peroxisome matrix. The enzyme catalyses 2 H2O2 = O2 + 2 H2O. Functionally, catalyzes the degradation of hydrogen peroxide (H(2)O(2)) generated by peroxisomal oxidases to water and oxygen, thereby protecting cells from the toxic effects of hydrogen peroxide. This chain is Catalase (cta1), found in Schizosaccharomyces pombe (strain 972 / ATCC 24843) (Fission yeast).